A 250-amino-acid polypeptide reads, in one-letter code: Sulfate transporter CysZ (250 aa).

4 helical membrane-spanning segments follow: residues 27–47 (FVVL…YYLF), 64–84 (FLSW…LATF), 150–170 (FLLL…WFLF), and 210–230 (MLVA…PVAV).

It belongs to the CysZ family.

It is found in the cell inner membrane. Functionally, high affinity, high specificity proton-dependent sulfate transporter, which mediates sulfate uptake. Provides the sulfur source for the cysteine synthesis pathway. The chain is Sulfate transporter CysZ from Vibrio cholerae serotype O1 (strain ATCC 39541 / Classical Ogawa 395 / O395).